We begin with the raw amino-acid sequence, 375 residues long: NADH-ubiquinone oxidoreductase 40 kDa subunit, mitochondrial (375 aa).

A mitochondrion-targeting transit peptide spans 1 to 26; the sequence is MAPLTAAMRSTPRIIVSNAFGFQRRA.

It belongs to the complex I NDUFA9 subunit family. Complex I is composed of about 40 different subunits. FAD serves as cofactor.

It is found in the mitochondrion matrix. Functionally, accessory subunit of the mitochondrial membrane respiratory chain NADH dehydrogenase (Complex I), that is believed not to be involved in catalysis. Complex I functions in the transfer of electrons from NADH to the respiratory chain. The immediate electron acceptor for the enzyme is believed to be ubiquinone. The chain is NADH-ubiquinone oxidoreductase 40 kDa subunit, mitochondrial (nuo40) from Neurospora crassa (strain ATCC 24698 / 74-OR23-1A / CBS 708.71 / DSM 1257 / FGSC 987).